A 196-amino-acid chain; its full sequence is Shikimate kinase (196 aa).

32–37 (GAGKSA) is a binding site for ATP. S36 is a Mg(2+) binding site. 3 residues coordinate substrate: D54, R78, and G100. An ATP-binding site is contributed by R138. Residue R157 coordinates substrate. R174 serves as a coordination point for ATP.

The protein belongs to the shikimate kinase family. Monomer. Requires Mg(2+) as cofactor.

It is found in the cytoplasm. It catalyses the reaction shikimate + ATP = 3-phosphoshikimate + ADP + H(+). It functions in the pathway metabolic intermediate biosynthesis; chorismate biosynthesis; chorismate from D-erythrose 4-phosphate and phosphoenolpyruvate: step 5/7. Its function is as follows. Catalyzes the specific phosphorylation of the 3-hydroxyl group of shikimic acid using ATP as a cosubstrate. The polypeptide is Shikimate kinase (Rhizobium leguminosarum bv. trifolii (strain WSM2304)).